A 492-amino-acid polypeptide reads, in one-letter code: MSTPTNPEQPTDHPSAPFTLEARFAEEFPEMTTPWRGEDQPDPELAVLNEDLARLLGIDPDWLRSPAGVEFLLGLNPEPTTEMVAQGYAGHQFGQFVPSLGDGRALLLGEIRGTDGVLRDIHLKGSGRTRYSRGADGRAALGPALREYLVSEAMHALGVPTTRALAVVTTGRKIQRDRVLPGAVVVRVATSHIRVGSFQYANITGGIDLSRRLADHAITRHYPRLVERFPESGPERYAWFFRQVMDAQAQTVARWMRLGFVHGVLNTDNTLVSGETIDYGPCAFMDRYREDAVFSSIDTHGRYKFSNQPLILGWNLARLAETLIPLFGDTPDAGVDRAQEMINTFTDRYNDALHAELAAGLGLDADAPDTAGLIESYLELMRTHSPDVTTLNRTLSEWSVESTPPAGFEEWIPRWLAAQPDLINMQKTNPVYVPRNHLVEDALAEAVEGRWEAFTTLLGLVTDPFTRQAGMEVYERPGPDGFEDTYMTFCGT.

ATP-binding residues include Gly-101, Gly-103, Arg-104, Lys-124, Asp-136, Gly-137, Arg-187, and Arg-194. Asp-268 acts as the Proton acceptor in catalysis. Asn-269 and Asp-278 together coordinate Mg(2+). Asp-278 contacts ATP.

Belongs to the SELO family. It depends on Mg(2+) as a cofactor. Mn(2+) is required as a cofactor.

It carries out the reaction L-seryl-[protein] + ATP = 3-O-(5'-adenylyl)-L-seryl-[protein] + diphosphate. The catalysed reaction is L-threonyl-[protein] + ATP = 3-O-(5'-adenylyl)-L-threonyl-[protein] + diphosphate. It catalyses the reaction L-tyrosyl-[protein] + ATP = O-(5'-adenylyl)-L-tyrosyl-[protein] + diphosphate. The enzyme catalyses L-histidyl-[protein] + UTP = N(tele)-(5'-uridylyl)-L-histidyl-[protein] + diphosphate. It carries out the reaction L-seryl-[protein] + UTP = O-(5'-uridylyl)-L-seryl-[protein] + diphosphate. The catalysed reaction is L-tyrosyl-[protein] + UTP = O-(5'-uridylyl)-L-tyrosyl-[protein] + diphosphate. In terms of biological role, nucleotidyltransferase involved in the post-translational modification of proteins. It can catalyze the addition of adenosine monophosphate (AMP) or uridine monophosphate (UMP) to a protein, resulting in modifications known as AMPylation and UMPylation. The sequence is that of Protein nucleotidyltransferase YdiU from Corynebacterium efficiens (strain DSM 44549 / YS-314 / AJ 12310 / JCM 11189 / NBRC 100395).